The following is a 459-amino-acid chain: ATP synthase subunit beta (459 aa).

148–155 (GGAGVGKT) serves as a coordination point for ATP.

It belongs to the ATPase alpha/beta chains family. F-type ATPases have 2 components, CF(1) - the catalytic core - and CF(0) - the membrane proton channel. CF(1) has five subunits: alpha(3), beta(3), gamma(1), delta(1), epsilon(1). CF(0) has three main subunits: a(1), b(2) and c(9-12). The alpha and beta chains form an alternating ring which encloses part of the gamma chain. CF(1) is attached to CF(0) by a central stalk formed by the gamma and epsilon chains, while a peripheral stalk is formed by the delta and b chains.

The protein resides in the cell inner membrane. It carries out the reaction ATP + H2O + 4 H(+)(in) = ADP + phosphate + 5 H(+)(out). In terms of biological role, produces ATP from ADP in the presence of a proton gradient across the membrane. The catalytic sites are hosted primarily by the beta subunits. This is ATP synthase subunit beta from Vesicomyosocius okutanii subsp. Calyptogena okutanii (strain HA).